Consider the following 381-residue polypeptide: Cytochrome b (381 aa).

4 helical membrane passes run 34-54 (FGSLLGLCLIIQILTGLFLAM), 78-99 (WLIRNIHANGASLFFICVYLHI), 114-134 (WNIGVILLFLLMATAFVGYVL), and 179-199 (FFAFHFLLPFLILALTIIHLL). Residues His84 and His98 each coordinate heme b. Heme b-binding residues include His183 and His197. Residue His202 coordinates a ubiquinone. The next 4 membrane-spanning stretches (helical) occupy residues 227-247 (YKDLLGFFVMIFFLAVFALFM), 289-309 (LGGVLALLFSIFILMLVPLLH), 321-341 (MTQIFFWLLVANSIILTWIGG), and 348-368 (FIMVGQIASISYFSLFLIIMP).

Belongs to the cytochrome b family. As to quaternary structure, the cytochrome bc1 complex contains 3 respiratory subunits (MT-CYB, CYC1 and UQCRFS1), 2 core proteins (UQCRC1 and UQCRC2) and probably 6 low-molecular weight proteins. The cofactor is heme b.

It is found in the mitochondrion inner membrane. Its function is as follows. Component of the ubiquinol-cytochrome c reductase complex (complex III or cytochrome b-c1 complex) that is part of the mitochondrial respiratory chain. The b-c1 complex mediates electron transfer from ubiquinol to cytochrome c. Contributes to the generation of a proton gradient across the mitochondrial membrane that is then used for ATP synthesis. The protein is Cytochrome b (mt-cyb) of Carcharhinus plumbeus (Sandbar shark).